A 1178-amino-acid polypeptide reads, in one-letter code: Integrin alpha-2 (1178 aa).

An N-terminal signal peptide occupies residues 1–26 (MGPGQAGGALLLRLLMLVQGILNCLA). Topologically, residues 27 to 1129 (YNVGLPGAKI…KPTEKAEVPT (1103 aa)) are extracellular. 2 FG-GAP repeats span residues 31-89 (LPGA…TATC) and 98-158 (ASIS…FLTS). A disulfide bridge links cysteine 80 with cysteine 89. Asparagine 102 and asparagine 109 each carry an N-linked (GlcNAc...) asparagine glycan. The 178-residue stretch at 185-362 (WEAVKNFLVK…TLGEQIFSIE (178 aa)) folds into the VWFA domain. FG-GAP repeat units lie at residues 363 to 417 (GTVQ…VIFP), 420 to 472 (AFDQ…KQGN), 474 to 536 (TVIQ…ILNQ), 537 to 595 (HQFL…TIRT), and 601 to 661 (ILGS…FTPD). Asparagine 429, asparagine 457, and asparagine 472 each carry an N-linked (GlcNAc...) asparagine glycan. Residues 480 to 482 (RGD) carry the Cell attachment site motif. Aspartate 496, aspartate 498, aspartate 500, aspartate 504, aspartate 560, asparagine 562, aspartate 564, aspartate 568, aspartate 624, asparagine 626, aspartate 628, and aspartate 632 together coordinate Ca(2+). Cystine bridges form between cysteine 677-cysteine 734, cysteine 786-cysteine 792, cysteine 862-cysteine 873, cysteine 1016-cysteine 1047, and cysteine 1052-cysteine 1057. An N-linked (GlcNAc...) asparagine glycan is attached at asparagine 696. Asparagine 1054, asparagine 1071, and asparagine 1078 each carry an N-linked (GlcNAc...) asparagine glycan. Residues 1130-1151 (GVIIGSIIAGILLLLAMTAGLW) form a helical membrane-spanning segment. The Cytoplasmic segment spans residues 1152–1178 (KLGFFKRQYKKMGQNPDEMDETTELNS). Positions 1154-1158 (GFFKR) match the GFFKR motif motif.

This sequence belongs to the integrin alpha chain family. In terms of assembly, heterodimer of an alpha and a beta subunit. Alpha-2 associates with beta-1. Interacts with HPS5 and RAB21.

Its subcellular location is the membrane. Integrin alpha-2/beta-1 is a collagen receptor, being responsible for adhesion of platelets and other cells to collagens, modulation of collagen and collagenase gene expression, force generation and organization of newly synthesized extracellular matrix. It is also a receptor for laminins, collagen C-propeptides and E-cadherin. Mice homozygous for a null mutation in the alpha-2 die very early in embryogenesis. The chain is Integrin alpha-2 (Itga2) from Mus musculus (Mouse).